We begin with the raw amino-acid sequence, 120 residues long: uncharacterized protein (120 aa).

This is an uncharacterized protein from Methanocaldococcus jannaschii (strain ATCC 43067 / DSM 2661 / JAL-1 / JCM 10045 / NBRC 100440) (Methanococcus jannaschii).